Here is a 538-residue protein sequence, read N- to C-terminus: Low affinity inorganic phosphate transporter 3 (538 aa).

The Cytoplasmic segment spans residues 1–24 (MAKDQLQVLNALDVAKTQLYHFTA). Residues 25-45 (IVIAGMGFFTDAYDLFCISLV) traverse the membrane as a helical segment. Topologically, residues 46–70 (TKLLGRIYYFHEGAPKPGILPSGIS) are extracellular. A helical transmembrane segment spans residues 71-91 (AAVNGVAFIGTLSGQLFFGWL). Residues 92–99 (GDKLGRKK) are Cytoplasmic-facing. A helical transmembrane segment spans residues 100 to 120 (VYGMTLMLMVICSIACGLSFG). The Extracellular segment spans residues 121 to 122 (KT). Residues 123–143 (ANGVIATLCFFRFWLGFGIGG) traverse the membrane as a helical segment. The Cytoplasmic segment spans residues 144–164 (DYPLSATIMSEYANKKTRGAF). The chain crosses the membrane as a helical span at residues 165 to 185 (IAAVFAMQGFGILAGGIVALI). At 186-211 (VSAGFKNAYPAPTYSAHGKDSTPPEA) the chain is on the extracellular side. A helical membrane pass occupies residues 212–232 (DYVWRIIVMIGALPALLTYYW). Residues 233-292 (RMKMPETARYTALVAKNTVKAAADMSKVLNVEIEEDKATVEKIEENGNSFGLFSKEFLRR) lie on the Cytoplasmic side of the membrane. Residues 293 to 313 (HGLHLLGTTSTWFLLDIAFYS) traverse the membrane as a helical segment. At 314 to 345 (QNLFQKDIFSKIGWIPPPETMNALDEVFRIAR) the chain is on the extracellular side. A helical transmembrane segment spans residues 346-366 (AQTLIALCSTVPGYWFTVAFI). Residues 367–371 (DKMGR) are Cytoplasmic-facing. A helical membrane pass occupies residues 372-392 (FAIQLMGSFFMTVFMFALAIP). The Extracellular segment spans residues 393 to 402 (YDHWTKKENR). The chain crosses the membrane as a helical span at residues 403–423 (IGFVIMYSLTFFFANFGPNAT). Residues 424–442 (TFVVPAEIFPARLRSTCHG) are Cytoplasmic-facing. A helical membrane pass occupies residues 443–463 (ISAAAGKAGAIVGAFGFLYAA). At 464 to 483 (QSTDPKKVDAGYPTGIGVKN) the chain is on the extracellular side. The chain crosses the membrane as a helical span at residues 484 to 504 (ALIVLGCVNFLGMLSTLLVPE). At 505–538 (SKGKSLEEMSKENEGEEENYGTETKGENAQTVPV) the chain is on the cytoplasmic side. The span at 506–517 (KGKSLEEMSKEN) shows a compositional bias: basic and acidic residues. The tract at residues 506-538 (KGKSLEEMSKENEGEEENYGTETKGENAQTVPV) is disordered.

Belongs to the major facilitator superfamily. Phosphate:H(+) symporter (TC 2.A.1.9) family. In terms of tissue distribution, expressed at low levels in non-mycorrhized roots.

It localises to the cell membrane. The catalysed reaction is phosphate(in) + H(+)(in) = phosphate(out) + H(+)(out). Functionally, low-affinity transporter for external inorganic phosphate (Pi) probably involved in the acquisition of phosphate released by arbuscular mycorrhizal (AM) fungi during AM symbiosis. The chain is Low affinity inorganic phosphate transporter 3 from Petunia hybrida (Petunia).